Consider the following 334-residue polypeptide: MGVTGISTFPCCGKDSVDIVERQSDHHRHHHHHTHEENEDEDTEVEAELPRTEPPPKVDPELGPVPQLEEMEPELPSKTTPETEGDSYTESPEQQNYRMESLKPYEEEEMGGRYRSIPVQTSKHLFWSNKLIQASEHSLQKALEKHHRSPQEKSISISQVYTECTQPPSSPPVSRPTTPTAIGLADLINFASSLAVASSSNMALPNLENMIKGTSEKSQNTSLDFCQPVQAIKFAQATQITQISSEKQDESPKSMAHKSWTRETRNVACSYLDINQAGLKTATIQGEVKFVQTPIASPQLQEAKEDSVPGTKKGNPLLLKIHFKLSSPQPQRND.

The segment at 24–98 is disordered; sequence SDHHRHHHHH…TESPEQQNYR (75 aa). Over residues 37 to 47 the composition is skewed to acidic residues; it reads ENEDEDTEVEA. The span at 48-60 shows a compositional bias: basic and acidic residues; sequence ELPRTEPPPKVDP. Polar residues predominate over residues 77–98; that stretch reads SKTTPETEGDSYTESPEQQNYR. A phosphoserine mark is found at Ser135 and Ser138.

In terms of assembly, interacts with syntaxin-1 and ACTB. Highly expressed in the testis and weakly in the brain and heart.

The chain is Spermatogenesis-associated protein 32 (Spata32) from Mus musculus (Mouse).